Consider the following 419-residue polypeptide: MYKLIINGGIALNGHVKTAGSKNSSLPILFASILANGPITLTNTPHLSDVSTTLRLLMDMGAEFILESDNSLFIDSSNLTNLVAQYNLVKTMRASILALGPMLAKYCKAKISLPGGCAIGSRPVNLHLKALEDLGAFIKVENGYIYATAKKLIGTEIHFDQISVTATENIIMAATLATGITTIYNAAQEPEIVDLINCLIKMGAKISGAGTSIITIEGVDELSGVTYAVCPDRIEAGTYLVAATITGGKITIKNVCYQSMRAILVKLLETGADIKTEKNSITLDMKGKRPKAVNIKTSTYPNFPTDMQAQFTALNAIADGYSTITETIFENRFMHIPELSRMGASLVLEGNTVVCKGVKSLTGAYLMATDLRASASLVLAGLAAIGTTTIERVYHLDRGYEMIEEKLKLLGAQIERVQD.

22 to 23 (KN) provides a ligand contact to phosphoenolpyruvate. Arg-93 is a UDP-N-acetyl-alpha-D-glucosamine binding site. Cys-117 functions as the Proton donor in the catalytic mechanism. Cys-117 carries the 2-(S-cysteinyl)pyruvic acid O-phosphothioketal modification. Residues Asp-306 and Ile-328 each coordinate UDP-N-acetyl-alpha-D-glucosamine.

It belongs to the EPSP synthase family. MurA subfamily.

The protein resides in the cytoplasm. The enzyme catalyses phosphoenolpyruvate + UDP-N-acetyl-alpha-D-glucosamine = UDP-N-acetyl-3-O-(1-carboxyvinyl)-alpha-D-glucosamine + phosphate. Its pathway is cell wall biogenesis; peptidoglycan biosynthesis. Functionally, cell wall formation. Adds enolpyruvyl to UDP-N-acetylglucosamine. This is UDP-N-acetylglucosamine 1-carboxyvinyltransferase from Ruthia magnifica subsp. Calyptogena magnifica.